Consider the following 652-residue polypeptide: Interferon-induced GTP-binding protein Mx1 (652 aa).

Residues 1–27 (MKERTSACRHGTPQKHPDTSEESQAME) are disordered. One can recognise a Dynamin-type G domain in the interval 58 to 331 (DLALPAIAVI…LTSHICKSLP (274 aa)). The interval 68–75 (GDQSSGKS) is G1 motif. Residue 68–75 (GDQSSGKS) coordinates GTP. Residues 93–95 (VTR) form a G2 motif region. The tract at residues 169-172 (DLPG) is G3 motif. Residues 169–173 (DLPGI) and 238–241 (TKPD) each bind GTP. The segment at 238 to 241 (TKPD) is G4 motif. The segment at 270-273 (KCRG) is G5 motif. Positions 332–357 (ILENQINVNHQIASEELQKYGADIPE) are bundle signaling element (BSE). The tract at residues 357 to 526 (EDDSKRLSFL…HFQMEHIVYC (170 aa)) is middle domain. A stalk region spans residues 358-622 (DDSKRLSFLM…TSKCNWFLTE (265 aa)). One can recognise a GED domain in the interval 564–652 (TTEMTQHLNA…AQRKLAKFSN (89 aa)).

It belongs to the TRAFAC class dynamin-like GTPase superfamily. Dynamin/Fzo/YdjA family. As to quaternary structure, homooligomer. Oligomerizes into multimeric filamentous or ring-like structures by virtue of its stalk domain. Oligomerization is critical for GTPase activity, protein stability, and recognition of viral target structures. Interacts with TRPC1, TRPC3, TRPC4, TRPC5, TRPC6 and TRPC7. Interacts with HSPA5. Interacts with TUBB/TUBB5. Interacts with DDX39A and DDX39B. ISGylated.

It localises to the nucleus. The protein resides in the cytoplasm. Its subcellular location is the endoplasmic reticulum membrane. The protein localises to the perinuclear region. Functionally, interferon-induced dynamin-like GTPase which has antiviral activity against influenza A virus, (IAV) and Thogoto virus (THOV). Inhibits IAV by interfering with the process of primary transcription, probably by affecting the viral polymerase function. In Rattus norvegicus (Rat), this protein is Interferon-induced GTP-binding protein Mx1 (Mx1).